The chain runs to 331 residues: Pectinesterase (331 aa).

The first 17 residues, 1–17, serve as a signal peptide directing secretion; the sequence is MVKSILASVLFAATALA. Q138 provides a ligand contact to substrate. D161 functions as the Proton donor in the catalytic mechanism. D182 functions as the Nucleophile in the catalytic mechanism. The substrate site is built by R247 and W249.

It belongs to the pectinesterase family.

The protein localises to the secreted. The enzyme catalyses [(1-&gt;4)-alpha-D-galacturonosyl methyl ester](n) + n H2O = [(1-&gt;4)-alpha-D-galacturonosyl](n) + n methanol + n H(+). It participates in glycan metabolism; pectin degradation; 2-dehydro-3-deoxy-D-gluconate from pectin: step 1/5. Functionally, involved in maceration and soft-rotting of plant tissue. The polypeptide is Pectinesterase (pme1) (Aspergillus niger).